Here is a 785-residue protein sequence, read N- to C-terminus: Semaphorin-3E (785 aa).

The N-terminal stretch at 1–25 is a signal peptide; sequence MLGRMASAQDLLILALCGLLLELPA. Residues 36–520 form the Sema domain; the sequence is RLRLSHKELW…TESVIAQVKF (485 aa). Asn48 carries N-linked (GlcNAc...) asparagine glycosylation. Cys109 and Cys119 are oxidised to a cystine. Residue Asn130 is glycosylated (N-linked (GlcNAc...) asparagine). Cystine bridges form between Cys137-Cys146, Cys274-Cys386, Cys298-Cys346, and Cys523-Cys541. Asn600 carries an N-linked (GlcNAc...) asparagine glycan. Residues 651–740 form the Ig-like C2-type domain; sequence LDAGTYFCQT…EYCEKVWCTD (90 aa). The cysteines at positions 658 and 733 are disulfide-linked. The segment at 744 to 785 is disordered; it reads KKLKMSPSKWKYANPQEKRQDQEKKARIRPEHYRLPRNIADS. Positions 759–777 are enriched in basic and acidic residues; that stretch reads QEKRQDQEKKARIRPEHYR.

It belongs to the semaphorin family. In terms of tissue distribution, collapsin-1, -2, -3, and -5 bind to overlapping but distinct axon tracts.

Its subcellular location is the secreted. Functionally, plays an important role in signaling via the cell surface receptor PLXND1. Mediates reorganization of the actin cytoskeleton, leading to the retraction of cell projections. Promotes focal adhesion disassembly and inhibits adhesion of endothelial cells to the extracellular matrix. Regulates angiogenesis. Can down-regulate sprouting angiogenesis. Required for normal vascular patterning during embryogenesis. Induces the collapse and paralysis of neuronal growth cones. Plays an important role in ensuring the specificity of synapse formation. This is Semaphorin-3E (SEMA3E) from Gallus gallus (Chicken).